The following is a 287-amino-acid chain: Large ribosomal subunit protein uL2 (287 aa).

Residues 221 to 287 (RGSVMNPCDH…SKRSRGGRDS (67 aa)) form a disordered region. The segment covering 258-287 (KTRKRNKPSNKFVLRKRRKTSKRSRGGRDS) has biased composition (basic residues).

This sequence belongs to the universal ribosomal protein uL2 family. As to quaternary structure, part of the 50S ribosomal subunit. Forms a bridge to the 30S subunit in the 70S ribosome.

One of the primary rRNA binding proteins. Required for association of the 30S and 50S subunits to form the 70S ribosome, for tRNA binding and peptide bond formation. It has been suggested to have peptidyltransferase activity; this is somewhat controversial. Makes several contacts with the 16S rRNA in the 70S ribosome. This is Large ribosomal subunit protein uL2 from Synechococcus sp. (strain RCC307).